The following is a 272-amino-acid chain: Petrobactin import ATP-binding protein FpuC (272 aa).

An ABC transporter domain is found at 2 to 238 (ISVNKVFYAH…EMFQHIFGIE (237 aa)). Position 34-41 (34-41 (GPNGSGKS)) interacts with ATP.

Belongs to the ABC transporter superfamily. In terms of assembly, the complex is composed of two ATP-binding proteins (FpuC), two transmembrane proteins (FpuB) and a solute-binding protein (FpuA).

The protein localises to the cell membrane. It catalyses the reaction a Fe(III)-siderophore(out) + ATP + H2O = a Fe(III)-siderophore(in) + ADP + phosphate + H(+). Functionally, part of an ABC transporter complex involved in ferric-petrobactin uptake. Probably responsible for energy coupling to the transport system. The chain is Petrobactin import ATP-binding protein FpuC from Bacillus anthracis.